A 367-amino-acid polypeptide reads, in one-letter code: MPRPIEALIHAEALTHNLARARAAVPDARVWAVVKAHAYGHGIARVFEALRAADGFALLDLAEAQQLRDLGWRGPILLLEGVFEPRDLELCSRLNLWHTVHCEAQIDWLAMHKTHQPHRVFLKMNSGMNRLGFRPAAFRAAWTRLHALPQVDEISLMSHFSDADGGRGIAAAMQVFDDATRDLPGERSLCNSAATLRHGADAAVRADWVRAGIMLYGSAPDFPSHDIAHWDLQPTMTLRARLIGTQDLQAGDTVGYGSRFTAEAPMRIGVVACGYADGYPRHAPSGTPVLVDGVRTRLVGRVSMDMVTVDLGGLPQAARGSEVTLWGRASSGAVLPIDEVAHAAGTVGYEPMCALAARVPVRLDAAG.

The active-site Proton acceptor; specific for D-alanine is the lysine 35. Lysine 35 is subject to N6-(pyridoxal phosphate)lysine. Arginine 130 contacts substrate. Tyrosine 256 serves as the catalytic Proton acceptor; specific for L-alanine. Position 304 (methionine 304) interacts with substrate.

Belongs to the alanine racemase family. Pyridoxal 5'-phosphate serves as cofactor.

The catalysed reaction is L-alanine = D-alanine. It participates in amino-acid biosynthesis; D-alanine biosynthesis; D-alanine from L-alanine: step 1/1. In terms of biological role, catalyzes the interconversion of L-alanine and D-alanine. May also act on other amino acids. The polypeptide is Alanine racemase (alr) (Methylibium petroleiphilum (strain ATCC BAA-1232 / LMG 22953 / PM1)).